The following is a 472-amino-acid chain: Succinate-semialdehyde dehydrogenase [NADP(+)] (472 aa).

Residues 134–135, 158–161, and 210–211 contribute to the NADP(+) site; these read WN, KHAS, and GS. Glu-232 acts as the Proton acceptor in catalysis. Leu-233 contributes to the NADP(+) binding site. Cys-266 functions as the Nucleophile in the catalytic mechanism. An NADP(+)-binding site is contributed by Glu-363.

This sequence belongs to the aldehyde dehydrogenase family.

It catalyses the reaction succinate semialdehyde + NADP(+) + H2O = succinate + NADPH + 2 H(+). In terms of biological role, catalyzes the NADP(+)-dependent oxidation of succinate semialdehyde to succinate. It is believed to be the main source of succinate semialdehyde dehydrogenase activity in Mycobacterium. This is Succinate-semialdehyde dehydrogenase [NADP(+)] (gabD1) from Mycobacterium avium (strain 104).